The sequence spans 72 residues: U10-myrmicitoxin-Tb1a (72 aa).

Positions 1–26 are cleaved as a signal peptide; sequence MRVSYLSLTLTIVVVIAIIYAPETEA. Positions 27–36 are excised as a propeptide; that stretch reads KAWADADAEA.

The protein belongs to the formicidae venom precursor-01 superfamily. In terms of tissue distribution, expressed by the venom gland.

Its subcellular location is the secreted. In terms of biological role, in vivo, this neurotoxin paralyzes about 40% of blowflies (L.caesar) one hour after intrathoracic injection, when tested at high doses (28 nmol/g). The sequence is that of U10-myrmicitoxin-Tb1a from Tetramorium bicarinatum (Tramp ant).